The following is a 1663-amino-acid chain: MSIDFDSGALQTQQEDEEYDKEDYAREQELQQLLTDLPHDMLDDSLSSSPEPSYSDCSGHEISEKIPQWEHGANWGNDDLPNHQKPYKNGFTENQYCMGFVGKQDEHLRNQAGRDKMSNGWDVLHANEDDPMFNGKYRYSKDHAYNSESNGQAFHGGDHYDAPGHCSSSELYHLPDDFQPYTNCQQVEHFPDSKKEHFQGFAVPEETSKISTEPFQVKYNPYQIKVARMDEMNQDPERRDGNFDDLQREFLDTGENSTGNMQFVQLQVLYKARGRQLEEQNNKLEESERQIRYLNHQLAIVKDQKDGLTISLQESQSLLQNSREMEIQLKGQLTALEKTVESLTTNEEQLRKELNISKVAMESFQQQLLDLRRSESIQRAREQHETVVSMLKKKHEEQVLALQQKLDDVNAMLNEEKELCSRLETRLKLSERKEAESKLEKTDIINRLSKSLEESQKQCANLLQSGSIQEATQLRLQLQQVQSSKIINDGMNKALQEEVRELQEQITMYESAARLGAFVNSGEEQQLSDSYVELGIKNFNWQKSRLGRIVANNGVKNDLSSEEIILELKTELERCLNSNKTKRKQIVQLQAELKGHLLKNEELKKSMEIAERTARDSQIQAENLANKVNNSPFYSSSSDRFREEIQKLQSEKQILQQENEKHLLFIKEFTVNEEKLKASNQELCNEMRGMIQDFDQDKKEAIERCERTYEQHNEDIKAHLLNELYEKFESEKELLSQGYEEKITLLQAQMNEIHREMAAVQECYIAVCKEKDALEENMREHFKKELQKSEEEVTAKAIQDVEMEWAQKLNQALQDAKTKSLQSFETQTIQTDESSLAKSDLNSDCIDELKVKLQNAIQEKEKAVHQAQLELEERHHEETSKQVEVALTRAYGRWLQELTSLPEYKARLKLEQEKWEKTNERNVERQVSDALYAAEIKWKMRSDKVDFTVRQKEFEEKIASMKRELELKAEESQALLKAEIATSRAQWNKEKHDEIQRLREDNEKDYRVFLDEHRNKLTDTLSTAKVEFEKQKNELIAQKDREMAERLDESLKQWALDESRRMRALENEILSEVEQCMYEIHDQLLDKSIVKDRLPSMKSNLDVTFLEKLKACLQKSVKGILYKVLANARQDWKKKYDTESNQETGIRGGELEGSDDRKTAKMWYLDKDLGKTEKQPCCEHWVQQLEKSKKECYEIRSKLEKACRHLQQLVKEQKLKAEKYRKNHILTEELKKQNSELQKKLELTVAPSPACLEPVEGGSNGCMMCNGNALEEIRAQYIKAVDKIKNDMLRYIHESKGRAAELLKSEVLRERQETARKMRKYYLTCLQQLLKDDGNNEGAEKKIINAASKLATMAKVLETPVSQKYQSKSLNSDLPQNENFLSETTQDQRSLQKPAHSHQNNNPLNQNIDQQTIEELIKRHVREKSDGNKVTDAEGASAINENSSFPTLRKSLVDNGNSQFVPSAPFQKLKTFSCIDSSTEGVLVTHQNKQSALQSGTLYPNSEHPKKKPGLQRFDLQETPVRDENGSNDWSCISSKSLFQPHSAKGSLTQLKMGPQNADVEEHSSAVASCSLAEENHNTFSSGARNQHFFAQVAKRKDENSGRKYSNKIQEPSATGIHPESKLFSDVGQGNKLPSRKLLLDFTLSPQQDSGFDSPFPNLNNFN.

The disordered stretch occupies residues 1–60 (MSIDFDSGALQTQQEDEEYDKEDYAREQELQQLLTDLPHDMLDDSLSSSPEPSYSDCSGH). The span at 44-57 (DSLSSSPEPSYSDC) shows a compositional bias: low complexity. Coiled-coil stretches lie at residues 266-516 (LQVL…ARLG), 571-664 (ELER…KHLL), 696-796 (QDKK…VTAK), 843-886 (SDCI…VEVA), 946-977 (DFTVRQKEFEEKIASMKRELELKAEESQALLK), 1014-1047 (RNKLTDTLSTAKVEFEKQKNELIAQKDREMAERL), and 1182-1288 (VQQL…KNDM). 2 disordered regions span residues 1383–1408 (ETTQDQRSLQKPAHSHQNNNPLNQNI) and 1595–1628 (KRKDENSGRKYSNKIQEPSATGIHPESKLFSDVG). A compositionally biased stretch (polar residues) spans 1603–1613 (RKYSNKIQEPS).

It belongs to the CEP152 family.

It localises to the cytoplasm. It is found in the cytoskeleton. The protein resides in the microtubule organizing center. The protein localises to the centrosome. Its subcellular location is the centriole. Functionally, necessary for centrosome duplication; the function also seems to involve cep63, cdk5rap2 and wdr62 through a stepwise assembled complex at the centrosome that recruits cdk2 required for centriole duplication. Acts as a molecular scaffold facilitating the interaction of plk4 and cpap, 2 molecules involved in centriole formation. Also plays a key role in deuterosome-mediated centriole amplification in multiciliated that can generate more than 100 centrioles. Overexpression of cep152 can drive amplification of centrioles. The polypeptide is Centrosomal protein of 152 kDa (cep152) (Xenopus laevis (African clawed frog)).